Consider the following 484-residue polypeptide: tRNA sulfurtransferase (484 aa).

Positions 63 to 167 constitute a THUMP domain; that stretch reads REMIERLTCT…DQRLYVIHNQ (105 aa). Residues 185–186, Lys-267, Gly-289, and Gln-298 contribute to the ATP site; that span reads LM. Residues Cys-346 and Cys-457 are joined by a disulfide bond. Positions 405 to 483 constitute a Rhodanese domain; it reads ALPGQIVIDI…GHANVRVYRP (79 aa). Cys-457 functions as the Cysteine persulfide intermediate in the catalytic mechanism.

Belongs to the ThiI family.

It is found in the cytoplasm. The catalysed reaction is [ThiI sulfur-carrier protein]-S-sulfanyl-L-cysteine + a uridine in tRNA + 2 reduced [2Fe-2S]-[ferredoxin] + ATP + H(+) = [ThiI sulfur-carrier protein]-L-cysteine + a 4-thiouridine in tRNA + 2 oxidized [2Fe-2S]-[ferredoxin] + AMP + diphosphate. It catalyses the reaction [ThiS sulfur-carrier protein]-C-terminal Gly-Gly-AMP + S-sulfanyl-L-cysteinyl-[cysteine desulfurase] + AH2 = [ThiS sulfur-carrier protein]-C-terminal-Gly-aminoethanethioate + L-cysteinyl-[cysteine desulfurase] + A + AMP + 2 H(+). Its pathway is cofactor biosynthesis; thiamine diphosphate biosynthesis. In terms of biological role, catalyzes the ATP-dependent transfer of a sulfur to tRNA to produce 4-thiouridine in position 8 of tRNAs, which functions as a near-UV photosensor. Also catalyzes the transfer of sulfur to the sulfur carrier protein ThiS, forming ThiS-thiocarboxylate. This is a step in the synthesis of thiazole, in the thiamine biosynthesis pathway. The sulfur is donated as persulfide by IscS. This Pseudomonas putida (strain ATCC 47054 / DSM 6125 / CFBP 8728 / NCIMB 11950 / KT2440) protein is tRNA sulfurtransferase.